The chain runs to 230 residues: MYSIKMRSSNQDVHISGAETICEFDKIEQTVQRFYNKGFFHENGQPDFLNIKIQKIMEPIQQIKALQIIEDDKANLQHLTQECGVTEQALNQGMTYIKNETVYTGAIILSAISGKRLDSFGQRGIRATHFSFEDINNKGDLNERVTDALAIASCINAHPYVKGELCVSDDLTYTTGYFAAAKIGYHRLFDIKPVNTRYGGRIIFVDDCIDLNHYISFLESTPKQVVYETV.

This sequence belongs to the BioW family. As to quaternary structure, homodimer. Mg(2+) is required as a cofactor.

The enzyme catalyses heptanedioate + ATP + CoA = 6-carboxyhexanoyl-CoA + AMP + diphosphate. The protein operates within metabolic intermediate metabolism; pimeloyl-CoA biosynthesis; pimeloyl-CoA from pimelate: step 1/1. Its function is as follows. Catalyzes the transformation of pimelate into pimeloyl-CoA with concomitant hydrolysis of ATP to AMP. This Staphylococcus aureus (strain Mu3 / ATCC 700698) protein is 6-carboxyhexanoate--CoA ligase.